A 596-amino-acid chain; its full sequence is Glomulin (596 aa).

Ala2 carries the N-acetylalanine modification. Residues 2–555 form an alpha-helical region with structural similarity to HEAT repeats region; sequence AVEELQSIIK…EEIPSMPPEM (554 aa). The important for interaction with RBX1 stretch occupies residues 299 to 596; it reads IDQLPMVLSP…STSEENVGIK (298 aa).

In terms of assembly, interacts with FKBP4 and FKBP1A. Interacts with RBX1 (via RING domain). Identified in complexes that contain RBX1 plus one of the cullins CUL1, CUL2, CUL3, and CUL4A. Identified in a SCF complex composed of CUL1, RBX1, SKP1, FBXW7 and GLMN. Component of a SCF-like complex consisting of CUL7, RBX1, SKP1, FBXW8 and GLMN. Interacts with unphosphorylated MET and is released upon MET phosphorylation. Post-translationally, phosphorylated on tyrosine residues. In terms of tissue distribution, ubiquitous. Detected in embryonic vasculature and embryonic perichondrium, and in adult eye, brain, heart, testis, kidney, smooth muscle and skeletal muscle.

In terms of biological role, regulatory component of cullin-RING-based SCF (SKP1-Cullin-F-box protein) E3 ubiquitin-protein ligase complexes. Inhibits E3 ubiquitin ligase activity by binding to the RING domain of RBX1 and inhibiting its interaction with the E2 ubiquitin-conjugating enzyme CDC34. Inhibits RBX1-mediated neddylation of CUL1. Required for normal stability and normal cellular levels of key components of SCF ubiquitin ligase complexes, including FBXW7, RBX1, CUL1, CUL2, CUL3, CUL4A, and thereby contributes to the regulation of CCNE1 and MYC levels. Essential for normal development of the vasculature. Contributes to the regulation of RPS6KB1 phosphorylation. This Mus musculus (Mouse) protein is Glomulin (Glmn).